Consider the following 180-residue polypeptide: Transcriptional repressor NrdR (180 aa).

A zinc finger spans residues 3 to 34 (CPRCSKQEIRVLESRSAEGGQSVRRRRECMSC). The region spanning 49 to 139 (IMVIKRDGSR…VYRQFQGIKD (91 aa)) is the ATP-cone domain. Positions 155–180 (LERLLQDSSASDSESSGSPDLVGEYS) are disordered. Residues 160–174 (QDSSASDSESSGSPD) show a composition bias toward low complexity.

Belongs to the NrdR family. Zn(2+) is required as a cofactor.

Negatively regulates transcription of bacterial ribonucleotide reductase nrd genes and operons by binding to NrdR-boxes. The sequence is that of Transcriptional repressor NrdR from Synechococcus sp. (strain JA-2-3B'a(2-13)) (Cyanobacteria bacterium Yellowstone B-Prime).